A 341-amino-acid chain; its full sequence is DNA-directed RNA polymerase subunit alpha (341 aa).

The alpha N-terminal domain (alpha-NTD) stretch occupies residues 1–223 (MEQKRPQLKA…DELSVFGNVE (223 aa)). Positions 268–341 (PQPFPTDQDT…LAQFGLALRD (74 aa)) are alpha C-terminal domain (alpha-CTD).

Belongs to the RNA polymerase alpha chain family. As to quaternary structure, homodimer. The RNAP catalytic core consists of 2 alpha, 1 beta, 1 beta' and 1 omega subunit. When a sigma factor is associated with the core the holoenzyme is formed, which can initiate transcription.

It carries out the reaction RNA(n) + a ribonucleoside 5'-triphosphate = RNA(n+1) + diphosphate. Its function is as follows. DNA-dependent RNA polymerase catalyzes the transcription of DNA into RNA using the four ribonucleoside triphosphates as substrates. This is DNA-directed RNA polymerase subunit alpha from Deinococcus radiodurans (strain ATCC 13939 / DSM 20539 / JCM 16871 / CCUG 27074 / LMG 4051 / NBRC 15346 / NCIMB 9279 / VKM B-1422 / R1).